The chain runs to 225 residues: AA9 family lytic polysaccharide monooxygenase A (225 aa).

Residues 1–17 (MLTTTFALLTAALGVSA) form the signal peptide. Cu(2+) contacts are provided by His18 and His85. 2 cysteine pairs are disulfide-bonded: Cys55–Cys173 and Cys143–Cys225. O2 contacts are provided by His159 and Gln168. Tyr170 serves as a coordination point for Cu(2+).

It belongs to the polysaccharide monooxygenase AA9 family. Cu(2+) is required as a cofactor.

It localises to the secreted. It catalyses the reaction [(1-&gt;4)-beta-D-glucosyl]n+m + reduced acceptor + O2 = 4-dehydro-beta-D-glucosyl-[(1-&gt;4)-beta-D-glucosyl]n-1 + [(1-&gt;4)-beta-D-glucosyl]m + acceptor + H2O.. Is able to utilize various natural phenolic compounds as reducing agents. Most of these reducing agents are present in plants, either free or as lignin building blocks, such as sinapic acid, or as flavonoids such as catechin and dopamine. Phenolic compounds with 1,2-benzenediol and 1,2,3-benzenetriol moieties yield the highest release of oxidized and non-oxidized glucooligosaccharides from cellulose compared to monophenols or sulfur-containing compounds. Lytic polysaccharide monooxygenase (LPMO) that depolymerizes crystalline and amorphous polysaccharides via the oxidation of scissile alpha- or beta-(1-4)-glycosidic bonds, yielding C1 or C4 oxidation products. Catalysis by LPMOs requires the reduction of the active-site copper from Cu(II) to Cu(I) by a reducing agent and H(2)O(2) or O(2) as a cosubstrate. Shows oxidative cleavage of xylan in addition to cellulose. Shows a strong synergistic effect with endoglucanase I (EGI) with a 16-fold higher release of detected oligosaccharides. The polypeptide is AA9 family lytic polysaccharide monooxygenase A (Thermothelomyces thermophilus (strain ATCC 42464 / BCRC 31852 / DSM 1799) (Sporotrichum thermophile)).